The sequence spans 338 residues: Tagatose 1,6-diphosphate aldolase (338 aa).

Belongs to the aldolase LacD family.

The enzyme catalyses D-tagatofuranose 1,6-bisphosphate = D-glyceraldehyde 3-phosphate + dihydroxyacetone phosphate. Its pathway is carbohydrate metabolism; D-tagatose 6-phosphate degradation; D-glyceraldehyde 3-phosphate and glycerone phosphate from D-tagatose 6-phosphate: step 2/2. This chain is Tagatose 1,6-diphosphate aldolase, found in Listeria innocua serovar 6a (strain ATCC BAA-680 / CLIP 11262).